Reading from the N-terminus, the 178-residue chain is Ribosome maturation factor RimM (178 aa).

One can recognise a PRC barrel domain in the interval 99-178; it reads QGEFYWRDLI…EITVDWDPGF (80 aa).

The protein belongs to the RimM family. Binds ribosomal protein uS19.

It localises to the cytoplasm. Its function is as follows. An accessory protein needed during the final step in the assembly of 30S ribosomal subunit, possibly for assembly of the head region. Essential for efficient processing of 16S rRNA. May be needed both before and after RbfA during the maturation of 16S rRNA. It has affinity for free ribosomal 30S subunits but not for 70S ribosomes. The protein is Ribosome maturation factor RimM of Pseudoalteromonas translucida (strain TAC 125).